Consider the following 577-residue polypeptide: Lysine-specific demethylase 7B (577 aa).

A PHD-type zinc finger spans residues 5 to 56 (QLYCVCRQPYDVSRFMIECDICKDWFHGSCVEVEEHYAVDIDVYHCPNCDVH). The JmjC domain occupies 198–354 (FSDTKMAELV…MQLRCYEMER (157 aa)). Thr247 contributes to the substrate binding site. Fe cation is bound by residues His250 and Asp252. Lys267 lines the substrate pocket. His322 is a Fe cation binding site. The interval 460 to 513 (CPSTRSAHERGSHARKTARRLRGHHHHHHRHHHHHHHHHHHNHQHSDGPKAPSH) is disordered. Positions 472–502 (HARKTARRLRGHHHHHHRHHHHHHHHHHHNH) are enriched in basic residues.

Belongs to the JHDM1 histone demethylase family. JHDM1D subfamily. The cofactor is Fe(2+). In terms of tissue distribution, predominantly expressed in brain.

The protein resides in the nucleus. Its function is as follows. Histone demethylase required for brain development. Specifically demethylates dimethylated 'Lys-9' and 'Lys-27' (H3K9me2 and H3K27me2, respectively) of histone H3 and monomethylated histone H4 'Lys-20' residue (H4K20Me1), thereby playing a central role in histone code. This Danio rerio (Zebrafish) protein is Lysine-specific demethylase 7B (jhdm1db).